The following is a 66-amino-acid chain: Toxin Os1 (66 aa).

The region spanning 2–66 is the LCN-type CS-alpha/beta domain; that stretch reads RDGYIVQLHN…PIKWLDPKCY (65 aa). Disulfide bonds link Cys-12–Cys-65, Cys-16–Cys-37, Cys-22–Cys-47, and Cys-26–Cys-49.

This sequence belongs to the long (4 C-C) scorpion toxin superfamily. Sodium channel inhibitor family. Alpha subfamily. In terms of tissue distribution, expressed by the venom gland.

The protein localises to the secreted. Functionally, alpha toxins bind voltage-independently at site-3 of sodium channels (Nav) and inhibit the inactivation of the activated channels, thereby blocking neuronal transmission. This toxin possesses a high paralytic activity against mice. The polypeptide is Toxin Os1 (Orthochirus scrobiculosus (Central Asian scorpion)).